We begin with the raw amino-acid sequence, 97 residues long: Co-chaperonin GroES (97 aa).

The protein belongs to the GroES chaperonin family. Heptamer of 7 subunits arranged in a ring. Interacts with the chaperonin GroEL.

It localises to the cytoplasm. Its function is as follows. Together with the chaperonin GroEL, plays an essential role in assisting protein folding. The GroEL-GroES system forms a nano-cage that allows encapsulation of the non-native substrate proteins and provides a physical environment optimized to promote and accelerate protein folding. GroES binds to the apical surface of the GroEL ring, thereby capping the opening of the GroEL channel. The polypeptide is Co-chaperonin GroES (Pseudomonas entomophila (strain L48)).